A 212-amino-acid polypeptide reads, in one-letter code: Large ribosomal subunit protein uL3 (212 aa).

Glutamine 152 is subject to N5-methylglutamine.

This sequence belongs to the universal ribosomal protein uL3 family. As to quaternary structure, part of the 50S ribosomal subunit. Forms a cluster with proteins L14 and L19. In terms of processing, methylated by PrmB.

Functionally, one of the primary rRNA binding proteins, it binds directly near the 3'-end of the 23S rRNA, where it nucleates assembly of the 50S subunit. This is Large ribosomal subunit protein uL3 from Chromohalobacter salexigens (strain ATCC BAA-138 / DSM 3043 / CIP 106854 / NCIMB 13768 / 1H11).